The following is a 333-amino-acid chain: 2-oxoglutarate-dependent dioxygenase 21, chloroplastic (333 aa).

A chloroplast-targeting transit peptide spans M1–R43. Residues G180–L281 form the Fe2OG dioxygenase domain. Fe cation-binding residues include H205, D207, and H262. R272 serves as a coordination point for 2-oxoglutarate.

It belongs to the iron/ascorbate-dependent oxidoreductase family. Fe(2+) is required as a cofactor. It depends on L-ascorbate as a cofactor. Expressed in roots.

It is found in the plastid. The protein resides in the chloroplast. It carries out the reaction melatonin + 2-oxoglutarate + O2 = 2-hydroxymelatonin + succinate + CO2. In terms of biological role, involved in melatonin degradation. Catalyzes the hydroxylation of melatonin to produce 2-hydroxymelatonin. The polypeptide is 2-oxoglutarate-dependent dioxygenase 21, chloroplastic (Oryza sativa subsp. japonica (Rice)).